We begin with the raw amino-acid sequence, 336 residues long: Transcription initiation factor IIB (336 aa).

The TFIIB-type zinc-finger motif lies at 41–72 (QKLRCPICGNTVFIEDAERGQIVCASCGYVLM). Positions 45, 48, 64, and 67 each coordinate Zn(2+). A run of 2 repeats spans residues 152–235 (HELN…AREL) and 246–327 (QYVP…ELAK).

The protein belongs to the TFIIB family.

Its function is as follows. Stabilizes TBP binding to an archaeal box-A promoter. Also responsible for recruiting RNA polymerase II to the pre-initiation complex (DNA-TBP-TFIIB). The polypeptide is Transcription initiation factor IIB (Caldivirga maquilingensis (strain ATCC 700844 / DSM 13496 / JCM 10307 / IC-167)).